We begin with the raw amino-acid sequence, 81 residues long: uncharacterized protein (81 aa).

The protein to Synechocystis PCC 6803 ssr2439.

Its function is as follows. May have a regulatory function. This is an uncharacterized protein from Synechococcus elongatus (strain ATCC 33912 / PCC 7942 / FACHB-805) (Anacystis nidulans R2).